The following is a 212-amino-acid chain: MNLLIMGLPGAGKGTQAAKIVEEFGVAHISTGDMFRAAMANQTEMGRLAKSYIDKGELVPDEVTNGIVKERLAEDDIAEKGFLLDGYPRTIEQAHALDATLEELGLRLDGVINIKVDPSCLVERLSGRIINRKTGETFHKVFNPPVDYKEEDYYQREDDKPETVKRRLDVNMAQGEPILEHYRKLGLVTDIEGNQEITDVFADVEKALLELK.

An ATP-binding site is contributed by 10-15; the sequence is GAGKGT. The tract at residues 30 to 59 is NMP; sequence STGDMFRAAMANQTEMGRLAKSYIDKGELV. Residues Thr31, Arg36, 57 to 59, 86 to 89, and Gln93 contribute to the AMP site; these read ELV and GYPR. The LID stretch occupies residues 127–159; that stretch reads GRIINRKTGETFHKVFNPPVDYKEEDYYQREDD. Residues Arg128 and 137–138 each bind ATP; that span reads TF. AMP is bound by residues Arg156 and Arg167. Residue Gln195 coordinates ATP.

The protein belongs to the adenylate kinase family. In terms of assembly, monomer.

The protein localises to the cytoplasm. It carries out the reaction AMP + ATP = 2 ADP. The protein operates within purine metabolism; AMP biosynthesis via salvage pathway; AMP from ADP: step 1/1. In terms of biological role, catalyzes the reversible transfer of the terminal phosphate group between ATP and AMP. Plays an important role in cellular energy homeostasis and in adenine nucleotide metabolism. The chain is Adenylate kinase from Streptococcus pyogenes serotype M3 (strain ATCC BAA-595 / MGAS315).